The sequence spans 313 residues: Ornithine carbamoyltransferase (313 aa).

Carbamoyl phosphate contacts are provided by residues 57 to 60, R108, and 135 to 138; these read STRT and HPTQ. L-ornithine is bound by residues N167, D231, and 235–236; that span reads SM. Carbamoyl phosphate-binding positions include 272 to 273 and R300; that span reads CL.

It belongs to the aspartate/ornithine carbamoyltransferase superfamily. OTCase family.

It localises to the cytoplasm. It carries out the reaction carbamoyl phosphate + L-ornithine = L-citrulline + phosphate + H(+). The protein operates within amino-acid biosynthesis; L-arginine biosynthesis; L-arginine from L-ornithine and carbamoyl phosphate: step 1/3. Reversibly catalyzes the transfer of the carbamoyl group from carbamoyl phosphate (CP) to the N(epsilon) atom of ornithine (ORN) to produce L-citrulline. The chain is Ornithine carbamoyltransferase from Thermotoga maritima (strain ATCC 43589 / DSM 3109 / JCM 10099 / NBRC 100826 / MSB8).